We begin with the raw amino-acid sequence, 381 residues long: 1-deoxy-D-xylulose 5-phosphate reductoisomerase (381 aa).

6 residues coordinate NADPH: T11, G12, S13, I14, N37, and N121. Position 122 (K122) interacts with 1-deoxy-D-xylulose 5-phosphate. NADPH is bound at residue E123. D147 contacts Mn(2+). Residues S148, E149, S173, and H196 each contribute to the 1-deoxy-D-xylulose 5-phosphate site. E149 lines the Mn(2+) pocket. An NADPH-binding site is contributed by G202. 1-deoxy-D-xylulose 5-phosphate is bound by residues S209, N214, K215, and E218. Mn(2+) is bound at residue E218.

This sequence belongs to the DXR family. Mg(2+) is required as a cofactor. Requires Mn(2+) as cofactor.

It catalyses the reaction 2-C-methyl-D-erythritol 4-phosphate + NADP(+) = 1-deoxy-D-xylulose 5-phosphate + NADPH + H(+). It functions in the pathway isoprenoid biosynthesis; isopentenyl diphosphate biosynthesis via DXP pathway; isopentenyl diphosphate from 1-deoxy-D-xylulose 5-phosphate: step 1/6. Catalyzes the NADPH-dependent rearrangement and reduction of 1-deoxy-D-xylulose-5-phosphate (DXP) to 2-C-methyl-D-erythritol 4-phosphate (MEP). The sequence is that of 1-deoxy-D-xylulose 5-phosphate reductoisomerase from Ruminiclostridium cellulolyticum (strain ATCC 35319 / DSM 5812 / JCM 6584 / H10) (Clostridium cellulolyticum).